Reading from the N-terminus, the 64-residue chain is Large ribosomal subunit protein bL33c (64 aa).

This sequence belongs to the bacterial ribosomal protein bL33 family.

It localises to the plastid. The protein resides in the cyanelle. The sequence is that of Large ribosomal subunit protein bL33c (rpl33) from Cyanophora paradoxa.